The following is a 61-amino-acid chain: MLILTRKVGESLLIGDDISITILNVRGNQVKIGVNAPKDVSVHREEIYQRIKQAEEKESTS.

The protein belongs to the CsrA/RsmA family. In terms of assembly, homodimer; the beta-strands of each monomer intercalate to form a hydrophobic core, while the alpha-helices form wings that extend away from the core.

The protein localises to the cytoplasm. Functionally, a key translational regulator that binds mRNA to regulate translation initiation and/or mRNA stability. Mediates global changes in gene expression, shifting from rapid growth to stress survival by linking envelope stress, the stringent response and the catabolite repression systems. Usually binds in the 5'-UTR; binding at or near the Shine-Dalgarno sequence prevents ribosome-binding, repressing translation, binding elsewhere in the 5'-UTR can activate translation and/or stabilize the mRNA. Its function is antagonized by small RNA(s). In Mannheimia succiniciproducens (strain KCTC 0769BP / MBEL55E), this protein is Translational regulator CsrA.